A 272-amino-acid chain; its full sequence is 2-amino-3,7-dideoxy-D-threo-hept-6-ulosonate synthase (272 aa).

The active-site Proton acceptor is aspartate 33. Residues 33 to 37 and 153 to 155 contribute to the 1-deoxy-D-threo-hexo-2,5-diulose 6-phosphate site; these read DHGVS and YPR. Residue tyrosine 153 is the Proton donor of the active site. The active-site Schiff-base intermediate with substrate is lysine 184. Residues 209–210 and 237–238 contribute to the 1-deoxy-D-threo-hexo-2,5-diulose 6-phosphate site; these read GG and GR.

This sequence belongs to the DeoC/FbaB aldolase family. ADHS subfamily. As to quaternary structure, homodecamer.

The catalysed reaction is 1-deoxy-D-threo-hexo-2,5-diulose 6-phosphate + L-aspartate 4-semialdehyde = 2,3-dioxopropyl phosphate + 2-amino-2,3,7-trideoxy-D-lyxo-hept-6-ulosonate. In terms of biological role, catalyzes a transaldol reaction between 6-deoxy-5-ketofructose 1-phosphate (DKFP) and L-aspartate semialdehyde (ASA) with an elimination of hydroxypyruvaldehyde phosphate to yield 2-amino-3,7-dideoxy-D-threo-hept-6-ulosonate (ADH). Plays a key role in an alternative pathway of the biosynthesis of 3-dehydroquinate (DHQ), which is involved in the canonical pathway for the biosynthesis of aromatic amino acids. The sequence is that of 2-amino-3,7-dideoxy-D-threo-hept-6-ulosonate synthase from Methanococcus maripaludis (strain C5 / ATCC BAA-1333).